Consider the following 278-residue polypeptide: Protoheme IX farnesyltransferase 1 (278 aa).

Helical transmembrane passes span 12-32 (VIWL…GGVD), 35-55 (LFSL…FNHY), 76-96 (LITP…GISL), 98-118 (FLLL…FYAV), 129-149 (WLNI…GYAL), 158-178 (AVLI…ALAF), 199-221 (ERAV…WLYL), 226-248 (GAGG…YAAV), and 255-275 (MWKM…ALIL).

Belongs to the UbiA prenyltransferase family. Protoheme IX farnesyltransferase subfamily.

Its subcellular location is the cell membrane. It catalyses the reaction heme b + (2E,6E)-farnesyl diphosphate + H2O = Fe(II)-heme o + diphosphate. It functions in the pathway porphyrin-containing compound metabolism; heme O biosynthesis; heme O from protoheme: step 1/1. Its function is as follows. Converts heme B (protoheme IX) to heme O by substitution of the vinyl group on carbon 2 of heme B porphyrin ring with a hydroxyethyl farnesyl side group. The sequence is that of Protoheme IX farnesyltransferase 1 from Pyrobaculum aerophilum (strain ATCC 51768 / DSM 7523 / JCM 9630 / CIP 104966 / NBRC 100827 / IM2).